A 949-amino-acid chain; its full sequence is Inactive atromentin synthetase invA3 (949 aa).

Positions 38 to 460 (RAVSQYPNHE…SGRIKDTVVV (423 aa)) are adenylation (A) domain. The region spanning 592 to 670 (ALSTETEKTL…NLAKYVDSLV (79 aa)) is the Carrier domain. Residues 597-667 (TEKTLAGIYA…VISNLAKYVD (71 aa)) form a thiolation and peptide carrier (T) domain region. Ser629 is subject to O-(pantetheine 4'-phosphoryl)serine. The segment at 693-934 (PIFMVHPGMA…YTLMDFDHVA (242 aa)) is thioesterase (TE) domain.

It belongs to the ATP-dependent AMP-binding enzyme family.

Its function is as follows. Inactive atromentin synthetase homolog. While the invA3 adenylation (A) domain is capable of adenylating 4-hydroxyphenylpyruvate (4-HPP), the invA3 enzyme is inactive because of its non-functional thioesterase (TE) domain. This chain is Inactive atromentin synthetase invA3 (invA3), found in Paxillus involutus (Naked brimcap).